The sequence spans 209 residues: Potassium-transporting ATPase KdpC subunit (209 aa).

Residues 18–38 (ALALFVLLGLGLGYSLVATGI) form a helical membrane-spanning segment.

Belongs to the KdpC family. As to quaternary structure, the system is composed of three essential subunits: KdpA, KdpB and KdpC.

It is found in the cell inner membrane. Its function is as follows. Part of the high-affinity ATP-driven potassium transport (or Kdp) system, which catalyzes the hydrolysis of ATP coupled with the electrogenic transport of potassium into the cytoplasm. This subunit acts as a catalytic chaperone that increases the ATP-binding affinity of the ATP-hydrolyzing subunit KdpB by the formation of a transient KdpB/KdpC/ATP ternary complex. The polypeptide is Potassium-transporting ATPase KdpC subunit (Xanthomonas campestris pv. campestris (strain 8004)).